The chain runs to 146 residues: Peptide methionine sulfoxide reductase MsrB (146 aa).

Positions 6–129 constitute a MsrB domain; sequence SAEAIAKLSA…NSASLRFVPK (124 aa). Catalysis depends on Cys118, which acts as the Nucleophile.

It belongs to the MsrB Met sulfoxide reductase family.

The enzyme catalyses L-methionyl-[protein] + [thioredoxin]-disulfide + H2O = L-methionyl-(R)-S-oxide-[protein] + [thioredoxin]-dithiol. This is Peptide methionine sulfoxide reductase MsrB from Brucella melitensis biotype 1 (strain ATCC 23456 / CCUG 17765 / NCTC 10094 / 16M).